The sequence spans 335 residues: Methionine import ATP-binding protein MetN 1 (335 aa).

Positions 2–242 (IEFQNVHKTY…PKHPTTRRFV (241 aa)) constitute an ABC transporter domain. 38–45 (GHSGAGKS) contacts ATP.

The protein belongs to the ABC transporter superfamily. Methionine importer (TC 3.A.1.24) family. As to quaternary structure, the complex is composed of two ATP-binding proteins (MetN), two transmembrane proteins (MetI) and a solute-binding protein (MetQ).

Its subcellular location is the cell inner membrane. It carries out the reaction L-methionine(out) + ATP + H2O = L-methionine(in) + ADP + phosphate + H(+). It catalyses the reaction D-methionine(out) + ATP + H2O = D-methionine(in) + ADP + phosphate + H(+). Functionally, part of the ABC transporter complex MetNIQ involved in methionine import. Responsible for energy coupling to the transport system. The chain is Methionine import ATP-binding protein MetN 1 from Pseudomonas fluorescens (strain ATCC BAA-477 / NRRL B-23932 / Pf-5).